Here is a 422-residue protein sequence, read N- to C-terminus: CinA-like protein (422 aa).

It belongs to the CinA family.

The protein is CinA-like protein of Mycolicibacterium vanbaalenii (strain DSM 7251 / JCM 13017 / BCRC 16820 / KCTC 9966 / NRRL B-24157 / PYR-1) (Mycobacterium vanbaalenii).